Here is a 620-residue protein sequence, read N- to C-terminus: Chaperone protein HscA homolog (620 aa).

Belongs to the heat shock protein 70 family.

Its function is as follows. Chaperone involved in the maturation of iron-sulfur cluster-containing proteins. Has a low intrinsic ATPase activity which is markedly stimulated by HscB. This is Chaperone protein HscA homolog from Acinetobacter baylyi (strain ATCC 33305 / BD413 / ADP1).